A 294-amino-acid chain; its full sequence is Nucleophosmin (294 aa).

Position 1 is an N-acetylmethionine (M1). The segment at 1–117 (MEDSMDMDMS…PVHISGQHLV (117 aa)) is necessary for interaction with APEX1. The required for interaction with SENP3 stretch occupies residues 1-187 (MEDSMDMDMS…DDDDDFDEEV (187 aa)). The residue at position 4 (S4) is a Phosphoserine; by PLK1 and PLK2. At S10 the chain carries Phosphoserine. K32 carries the post-translational modification N6-acetyllysine; alternate. A Glycyl lysine isopeptide (Lys-Gly) (interchain with G-Cter in SUMO1); alternate cross-link involves residue K32. K32 is covalently cross-linked (Glycyl lysine isopeptide (Lys-Gly) (interchain with G-Cter in SUMO2); alternate). S43 bears the Phosphoserine mark. Residue Y67 is modified to Phosphotyrosine. S70 carries the post-translational modification Phosphoserine. Residues T75 and T95 each carry the phosphothreonine modification. Positions 121-132 (EDAESEEEEEEE) are enriched in acidic residues. Residues 121 to 249 (EDAESEEEEE…GPSSVEDIKA (129 aa)) are disordered. The residue at position 125 (S125) is a Phosphoserine; by CDK2. Residues S137 and S139 each carry the phosphoserine modification. K141 is covalently cross-linked (Glycyl lysine isopeptide (Lys-Gly) (interchain with G-Cter in SUMO2)). K150 carries the post-translational modification N6-acetyllysine; alternate. A Glycyl lysine isopeptide (Lys-Gly) (interchain with G-Cter in SUMO2); alternate cross-link involves residue K150. The short motif at 152-157 (PQKKVK) is the Nuclear localization signal element. K154 is modified (N6-acetyllysine). The segment covering 161–188 (DEDEDDDDDDDDDDDEDDDDDDFDEEVE) has biased composition (acidic residues). The tract at residues 188 to 216 (EEKAPVKKSVRDTPAKNAQKSNQNGKDSK) is interaction with NOP2. Positions 189–201 (EKAPVKKSVRDTP) are enriched in basic and acidic residues. Positions 192–198 (PVKKSVR) match the Nuclear localization signal motif. Phosphothreonine; by CDK1 and CDK2 is present on T200. Residues 203–222 (KNAQKSNQNGKDSKPSTPRS) are compositionally biased toward polar residues. An ADP-ribosylserine modification is found at S208. The residue at position 213 (K213) is an N6-acetyllysine. K216 participates in a covalent cross-link: Glycyl lysine isopeptide (Lys-Gly) (interchain with G-Cter in SUMO2). Residue T219 is modified to Phosphothreonine; by CDK1. The span at 223 to 235 (KGQESFKKQEKTP) shows a compositional bias: basic and acidic residues. S227 carries the phosphoserine modification. K229 is modified (N6-acetyllysine). An N6-acetyllysine; alternate modification is found at K230. K230 is covalently cross-linked (Glycyl lysine isopeptide (Lys-Gly) (interchain with G-Cter in SUMO); alternate). Residues T234 and T237 each carry the phosphothreonine modification. Residues S242 and S243 each carry the phosphoserine modification. The required for nucleolar localization stretch occupies residues 243–294 (SVEDIKAKMQASIEKGGSLPKVEAKFINYVKNCFRMTDQEAIQDLWQWRKSL). Residue K248 forms a Glycyl lysine isopeptide (Lys-Gly) (interchain with G-Cter in SUMO1); alternate linkage. Residues K248 and K250 each participate in a glycyl lysine isopeptide (Lys-Gly) (interchain with G-Cter in SUMO2); alternate cross-link. K250 carries the N6-acetyllysine; alternate modification. S254 carries the phosphoserine modification. K257 is modified (N6-acetyllysine; alternate). K257 participates in a covalent cross-link: Glycyl lysine isopeptide (Lys-Gly) (interchain with G-Cter in SUMO1); alternate. K257 is covalently cross-linked (Glycyl lysine isopeptide (Lys-Gly) (interchain with G-Cter in SUMO2); alternate). S260 carries the phosphoserine modification. Glycyl lysine isopeptide (Lys-Gly) (interchain with G-Cter in SUMO2); alternate cross-links involve residues K263, K267, and K273. K263 is covalently cross-linked (Glycyl lysine isopeptide (Lys-Gly) (interchain with G-Cter in SUMO); alternate). 2 positions are modified to N6-acetyllysine; alternate: K267 and K273. Residue K267 forms a Glycyl lysine isopeptide (Lys-Gly) (interchain with G-Cter in SUMO1); alternate linkage. K267 carries the N6-succinyllysine; alternate modification. T279 is modified (phosphothreonine). Residue K292 is modified to N6-acetyllysine.

The protein belongs to the nucleoplasmin family. As to quaternary structure, decamer formed by two pentameric rings associated in a head-to-head fashion. Disulfide-linked dimers under certain conditions. The SWAP complex consists of NPM1, NCL, PARP1 and SWAP70. Interacts with NSUN2 and SENP3. Interacts with the methylated form of RPS10. Interacts (via N-terminal domain) with APEX1; the interaction is RNA-dependent and decreases in hydrogen peroxide-damaged cells. Interacts with isoform 1 of NEK2. Interacts with ROCK2 and BRCA2. Interacts with RPGR. Interacts with CENPW. Interacts with EIF2AK2/PKR. Interacts with CEBPA (isoform 4). Interacts with DDX31; this interaction prevents interaction between NPM1 and HDM2. Interacts with MYC; competitive with NOP53. Interacts with NOP53; the interaction is direct and competitive with MYC. Interacts with LRRC34. Interacts with RRP1B. Interacts with NPM3. Interacts with ALKBH2. Interacts with TTF1 (via C-terminal region). Interacts with NOP2. Interacts with ARID3C (via REKLES DOMAIN); the interaction mediates ARID3C nuclear shuttling. Post-translationally, acetylated at C-terminal lysine residues, thereby increasing affinity to histones. ADP-ribosylated. In terms of processing, phosphorylated at Ser-4 by PLK1 and PLK2. Phosphorylation at Ser-4 by PLK2 in S phase is required for centriole duplication and is sufficient to trigger centriole replication. Phosphorylation at Ser-4 by PLK1 takes place during mitosis. Phosphorylated by CDK2 at Ser-125 and Thr-200. Phosphorylation at Thr-200 may trigger initiation of centrosome duplication. Phosphorylated by CDK1 at Thr-200, Thr-219, Thr-234 and Thr-237 during cell mitosis. When these four sites are phosphorated, RNA-binding activity seem to be abolished. May be phosphorylated at Ser-70 by NEK2. The Thr-200 phosphorylated form has higher affinity for ROCK2. Post-translationally, sumoylated by ARF. May be ubiquitinated. Ubiquitination leads to proteasomal degradation. Deubiquitinated by USP36.

The protein resides in the nucleus. It localises to the nucleolus. It is found in the nucleoplasm. The protein localises to the cytoplasm. Its subcellular location is the cytoskeleton. The protein resides in the microtubule organizing center. It localises to the centrosome. Its function is as follows. Involved in diverse cellular processes such as ribosome biogenesis, centrosome duplication, protein chaperoning, histone assembly, cell proliferation, and regulation of tumor suppressors p53/TP53 and ARF. Binds ribosome presumably to drive ribosome nuclear export. Associated with nucleolar ribonucleoprotein structures and bind single-stranded nucleic acids. Acts as a chaperonin for the core histones H3, H2B and H4. Stimulates APEX1 endonuclease activity on apurinic/apyrimidinic (AP) double-stranded DNA but inhibits APEX1 endonuclease activity on AP single-stranded RNA. May exert a control of APEX1 endonuclease activity within nucleoli devoted to repair AP on rDNA and the removal of oxidized rRNA molecules. In concert with BRCA2, regulates centrosome duplication. Regulates centriole duplication: phosphorylation by PLK2 is able to trigger centriole replication. Negatively regulates the activation of EIF2AK2/PKR and suppresses apoptosis through inhibition of EIF2AK2/PKR autophosphorylation. Antagonizes the inhibitory effect of ATF5 on cell proliferation and relieves ATF5-induced G2/M blockade. In complex with MYC enhances the transcription of MYC target genes. May act as chaperonin or cotransporter in the nucleolar localization of transcription termination factor TTF1. This is Nucleophosmin (NPM1) from Bos taurus (Bovine).